We begin with the raw amino-acid sequence, 444 residues long: Glutamyl-tRNA(Gln) amidotransferase subunit D (444 aa).

The region spanning 92-424 (SEIKIISTGG…EKIQNLMITN (333 aa)) is the Asparaginase/glutaminase domain. Catalysis depends on residues Thr102, Thr178, Asp179, and Lys257.

The protein belongs to the asparaginase 1 family. GatD subfamily. In terms of assembly, heterodimer of GatD and GatE.

It carries out the reaction L-glutamyl-tRNA(Gln) + L-glutamine + ATP + H2O = L-glutaminyl-tRNA(Gln) + L-glutamate + ADP + phosphate + H(+). Functionally, allows the formation of correctly charged Gln-tRNA(Gln) through the transamidation of misacylated Glu-tRNA(Gln) in organisms which lack glutaminyl-tRNA synthetase. The reaction takes place in the presence of glutamine and ATP through an activated gamma-phospho-Glu-tRNA(Gln). The GatDE system is specific for glutamate and does not act on aspartate. In Saccharolobus solfataricus (strain ATCC 35092 / DSM 1617 / JCM 11322 / P2) (Sulfolobus solfataricus), this protein is Glutamyl-tRNA(Gln) amidotransferase subunit D.